The primary structure comprises 403 residues: Imidazolonepropionase (403 aa).

Fe(3+) is bound by residues histidine 74 and histidine 76. The Zn(2+) site is built by histidine 74 and histidine 76. 3 residues coordinate 4-imidazolone-5-propanoate: arginine 83, tyrosine 146, and histidine 179. Tyrosine 146 provides a ligand contact to N-formimidoyl-L-glutamate. Histidine 242 contacts Fe(3+). Histidine 242 contributes to the Zn(2+) binding site. 4-imidazolone-5-propanoate is bound at residue glutamine 245. Residue aspartate 317 coordinates Fe(3+). Aspartate 317 contacts Zn(2+). Residues asparagine 319 and glycine 321 each coordinate N-formimidoyl-L-glutamate. Threonine 322 contacts 4-imidazolone-5-propanoate.

It belongs to the metallo-dependent hydrolases superfamily. HutI family. Requires Zn(2+) as cofactor. Fe(3+) serves as cofactor.

It localises to the cytoplasm. It carries out the reaction 4-imidazolone-5-propanoate + H2O = N-formimidoyl-L-glutamate. It functions in the pathway amino-acid degradation; L-histidine degradation into L-glutamate; N-formimidoyl-L-glutamate from L-histidine: step 3/3. In terms of biological role, catalyzes the hydrolytic cleavage of the carbon-nitrogen bond in imidazolone-5-propanoate to yield N-formimidoyl-L-glutamate. It is the third step in the universal histidine degradation pathway. The sequence is that of Imidazolonepropionase from Sphingopyxis alaskensis (strain DSM 13593 / LMG 18877 / RB2256) (Sphingomonas alaskensis).